Here is a 309-residue protein sequence, read N- to C-terminus: Eugenol synthase 2 (309 aa).

NADP(+)-binding positions include 13 to 16, 35 to 45, arginine 36, 86 to 88, 111 to 113, lysine 134, and 154 to 156; these read TGYI, VRETTVSDPVK, FMQ, SEF, and NCF. Lysine 134 functions as the Proton donor/acceptor in the catalytic mechanism.

This sequence belongs to the NmrA-type oxidoreductase family. In terms of tissue distribution, mostly expressed in petals, and, to a lower extent, in sepals, stamens and pistils.

It catalyses the reaction eugenol + a carboxylate + NADP(+) = a coniferyl ester + NADPH. The enzyme catalyses eugenol + acetate + NADP(+) = (E)-coniferyl acetate + NADPH. Its pathway is aromatic compound metabolism; phenylpropanoid biosynthesis. Functionally, catalyzes the synthesis of the phenylpropene eugenol from coniferyl acetate. Phenylpropenes are produced by plants as defense compounds with antimicrobial and antianimal properties, or as floral attractants of pollinators. This is Eugenol synthase 2 from Clarkia breweri (Fairy fans).